The following is a 342-amino-acid chain: MAAVALMPPPLLLLLLLASPPAASAPSARDPFAPQLGDTQNCQLRCRDRDLGPQPSQAGLEGASESPYDRAVLISACERGCRLFSICRFVARSSKPNATQTECEAACVEAYVKEAEQQACSHGCWSQPAEPEPEQKRKVLEAPSGALSLLDLFSTLCNDLVNSAQGFVSSTWTYYLQTDNGKVVVFQTQPIVESLGFQGGRLQRVEVTWRGSHPEALEVHVDPVGPLDKVRKAKIRVKTSSKAKVESEEPQDNDFLSCMSRRSGLPRWILACCLFLSVLVMLWLSCSTLVTAPGQHLKFQPLTLEQHKGFMMEPDWPLYPPPSHACEDSLPPYKLKLDLTKL.

The N-terminal stretch at 1–24 is a signal peptide; that stretch reads MAAVALMPPPLLLLLLLASPPAAS. N-linked (GlcNAc...) asparagine glycosylation occurs at asparagine 97. A helical membrane pass occupies residues 268–290; that stretch reads WILACCLFLSVLVMLWLSCSTLV. The Microbody targeting signal signature appears at 340–342; sequence TKL.

Belongs to the TMEM59 family. In terms of tissue distribution, expressed preferentially at high level in the brain.

It is found in the golgi apparatus membrane. Modulates the O-glycosylation and complex N-glycosylation steps occurring during the Golgi maturation of APP. Inhibits APP transport to the cell surface and further shedding. The sequence is that of Transmembrane protein 59-like (TMEM59L) from Homo sapiens (Human).